Consider the following 96-residue polypeptide: Toxin ParE1 (96 aa).

This sequence belongs to the RelE toxin family. As to quaternary structure, forms a ParD1(2)-ParE1(2) heterotetramer.

Its function is as follows. Toxic component of a type II toxin-antitoxin (TA) system. Its toxic effect is neutralized by coexpression with cognate antitoxin ParD1 but no other ParD or RelB antitoxin. Low levels of wild-type toxin in the absence of antitoxin decreases the rate of cell growth, and results in death or loss of colony formation abilities and greatly elongated cells. Low levels of a mutant missing the last 4 residues leads to loss of cell division while cell elongation continues. The protein is Toxin ParE1 (parE1) of Caulobacter vibrioides (strain ATCC 19089 / CIP 103742 / CB 15) (Caulobacter crescentus).